We begin with the raw amino-acid sequence, 211 residues long: Holliday junction branch migration complex subunit RuvA (211 aa).

A domain I region spans residues 1–70; sequence MIQFLQGQVV…QDQIALFGFG (70 aa). The interval 71-149 is domain II; the sequence is RLAERDLFGQ…QWHKLQMGTG (79 aa). The flexible linker stretch occupies residues 150–158; sequence ETDSTLPTT. The interval 158 to 211 is domain III; it reads TALLEDLEMTLLALGYTQTEIQQAIAMVSQVPDVAQSEDPEVWIRQAIGWLSDH.

It belongs to the RuvA family. As to quaternary structure, homotetramer. Forms an RuvA(8)-RuvB(12)-Holliday junction (HJ) complex. HJ DNA is sandwiched between 2 RuvA tetramers; dsDNA enters through RuvA and exits via RuvB. An RuvB hexamer assembles on each DNA strand where it exits the tetramer. Each RuvB hexamer is contacted by two RuvA subunits (via domain III) on 2 adjacent RuvB subunits; this complex drives branch migration. In the full resolvosome a probable DNA-RuvA(4)-RuvB(12)-RuvC(2) complex forms which resolves the HJ.

The protein resides in the cytoplasm. The RuvA-RuvB-RuvC complex processes Holliday junction (HJ) DNA during genetic recombination and DNA repair, while the RuvA-RuvB complex plays an important role in the rescue of blocked DNA replication forks via replication fork reversal (RFR). RuvA specifically binds to HJ cruciform DNA, conferring on it an open structure. The RuvB hexamer acts as an ATP-dependent pump, pulling dsDNA into and through the RuvAB complex. HJ branch migration allows RuvC to scan DNA until it finds its consensus sequence, where it cleaves and resolves the cruciform DNA. In Synechocystis sp. (strain ATCC 27184 / PCC 6803 / Kazusa), this protein is Holliday junction branch migration complex subunit RuvA.